Reading from the N-terminus, the 381-residue chain is L-lactate dehydrogenase A-like 6B (381 aa).

NAD(+) contacts are provided by residues 101 to 106 (DVDEGR) and Arg-148. Residues Arg-155, Asn-187, and Arg-218 each contribute to the substrate site. Asn-187 is a binding site for NAD(+). His-242 (proton acceptor) is an active-site residue. Thr-297 is a substrate binding site.

Belongs to the LDH/MDH superfamily. LDH family.

It carries out the reaction (S)-lactate + NAD(+) = pyruvate + NADH + H(+). The protein operates within fermentation; pyruvate fermentation to lactate; (S)-lactate from pyruvate: step 1/1. The chain is L-lactate dehydrogenase A-like 6B (LDHAL6B) from Bos taurus (Bovine).